A 258-amino-acid polypeptide reads, in one-letter code: UPF0246 protein HI_0984 (258 aa).

It belongs to the UPF0246 family.

This is UPF0246 protein HI_0984 from Haemophilus influenzae (strain ATCC 51907 / DSM 11121 / KW20 / Rd).